The sequence spans 430 residues: Adenylosuccinate synthetase (430 aa).

GTP-binding positions include 12 to 18 and 40 to 42; these read GDEGKGK and GHT. Residue Asp-13 is the Proton acceptor of the active site. Mg(2+)-binding residues include Asp-13 and Gly-40. IMP contacts are provided by residues 13–16, 38–41, Thr-128, Arg-142, Gln-223, Thr-238, and Arg-302; these read DEGK and NAGH. The active-site Proton donor is the His-41. Position 298 to 304 (298 to 304) interacts with substrate; the sequence is TTTGRPR. GTP-binding positions include Arg-304, 330–332, and 412–414; these read SID and SVG.

This sequence belongs to the adenylosuccinate synthetase family. In terms of assembly, homodimer. It depends on Mg(2+) as a cofactor.

The protein resides in the cytoplasm. It catalyses the reaction IMP + L-aspartate + GTP = N(6)-(1,2-dicarboxyethyl)-AMP + GDP + phosphate + 2 H(+). The protein operates within purine metabolism; AMP biosynthesis via de novo pathway; AMP from IMP: step 1/2. Its function is as follows. Plays an important role in the de novo pathway of purine nucleotide biosynthesis. Catalyzes the first committed step in the biosynthesis of AMP from IMP. The chain is Adenylosuccinate synthetase from Streptococcus sanguinis (strain SK36).